Reading from the N-terminus, the 657-residue chain is MPASPEPVTATPEPEEVPAKFTLEAADIAVVVVYFVFVLAVGIWSSIRANRGTVGGYFLAGRSMTWWPIGASLMSSNVGSGLFIGLAGTGAAGGLAVGGFEWNAAWVLIALGWIFVPVYISAGVVTMPEYLRKRFGGQRIRIYMSVLSLILYILTKISTDIFSGALFIQVSLGWDLYLSTVILLAVTALYTIAGGLTAVIYTDALQTVIMVIGAFVLMFIAFDKVGWYEGLLVQYEKAAPALTVPNTTCHLPRSDAFHIFRDPVTGDIPWPGLIFGLTVLATWVWCTDQVIVQRSLSAKNLSHAKAGSVLGGYLKVFPMFFVVMPGMISRALYPDEVACVDPDECQKICGAKVGCSNIAYPKLVVELMPVGMRGLMIAVMMAALMSSLTSIFNSSSTLFTMDIWQRIRPRASEKELMVVGRVFILLLVALSIVWIPVIQTANSGQLFDYIQAITSFLSPPITTVFIMAIFWGRVNEQGAFWGLMVGLVVGMVRMIMEFVYGTPSCGETDLRPSLLKDVHYLYFALILLALTVLIITAVSLCTAPIPEKHLVRLTWWTRHSKEERVELEDPWAKPAGSDLSTTESEGSDEDAPAWWKRAGMWLCGLSQTTKQDLTEEERQALEKKLTSIEEDHMWKTVCNVNALILLTANVFLWGYFA.

Over 1–24 (MPASPEPVTATPEPEEVPAKFTLE) the chain is Extracellular. Residues 25–45 (AADIAVVVVYFVFVLAVGIWS) traverse the membrane as a helical segment. At 46-79 (SIRANRGTVGGYFLAGRSMTWWPIGASLMSSNVG) the chain is on the cytoplasmic side. The helical transmembrane segment at 80–100 (SGLFIGLAGTGAAGGLAVGGF) threads the bilayer. Residues 101–104 (EWNA) are Extracellular-facing. Residues 105-125 (AWVLIALGWIFVPVYISAGVV) form a helical membrane-spanning segment. Topologically, residues 126 to 147 (TMPEYLRKRFGGQRIRIYMSVL) are cytoplasmic. Residues 148–168 (SLILYILTKISTDIFSGALFI) form a helical membrane-spanning segment. At 169–180 (QVSLGWDLYLST) the chain is on the extracellular side. A helical transmembrane segment spans residues 181–201 (VILLAVTALYTIAGGLTAVIY). Topologically, residues 202-207 (TDALQT) are cytoplasmic. A helical membrane pass occupies residues 208–228 (VIMVIGAFVLMFIAFDKVGWY). Over 229 to 265 (EGLLVQYEKAAPALTVPNTTCHLPRSDAFHIFRDPVT) the chain is Extracellular. A glycan (N-linked (GlcNAc...) asparagine) is linked at N246. The chain crosses the membrane as a helical span at residues 266 to 286 (GDIPWPGLIFGLTVLATWVWC). Residues 287–307 (TDQVIVQRSLSAKNLSHAKAG) lie on the Cytoplasmic side of the membrane. Residues 308–328 (SVLGGYLKVFPMFFVVMPGMI) traverse the membrane as a helical segment. Residues 329-373 (SRALYPDEVACVDPDECQKICGAKVGCSNIAYPKLVVELMPVGMR) are Extracellular-facing. The chain crosses the membrane as a helical span at residues 374 to 396 (GLMIAVMMAALMSSLTSIFNSSS). The Cytoplasmic segment spans residues 397–417 (TLFTMDIWQRIRPRASEKELM). A helical transmembrane segment spans residues 418 to 438 (VVGRVFILLLVALSIVWIPVI). Residues 439–451 (QTANSGQLFDYIQ) lie on the Extracellular side of the membrane. Residues 452-472 (AITSFLSPPITTVFIMAIFWG) traverse the membrane as a helical segment. Topologically, residues 473–478 (RVNEQG) are cytoplasmic. The chain crosses the membrane as a helical span at residues 479-499 (AFWGLMVGLVVGMVRMIMEFV). Residues 500-520 (YGTPSCGETDLRPSLLKDVHY) lie on the Extracellular side of the membrane. The helical transmembrane segment at 521 to 541 (LYFALILLALTVLIITAVSLC) threads the bilayer. The Cytoplasmic portion of the chain corresponds to 542 to 636 (TAPIPEKHLV…SIEEDHMWKT (95 aa)). A helical membrane pass occupies residues 637 to 657 (VCNVNALILLTANVFLWGYFA).

The protein belongs to the sodium:solute symporter (SSF) (TC 2.A.21) family.

It localises to the membrane. In terms of biological role, probable sodium-dependent sugar transporter. This is Sodium/glucose cotransporter 4 (slc5a9) from Danio rerio (Zebrafish).